We begin with the raw amino-acid sequence, 124 residues long: Urocortin (124 aa).

An N-terminal signal peptide occupies residues 1 to 25; it reads MRQAGRAALLAALLLLVQLCPGSSQ. Residues 23 to 46 are disordered; sequence SSQRSPEAAGVQDPSLRWSPGARN. Residues 26–82 constitute a propeptide that is removed on maturation; the sequence is RSPEAAGVQDPSLRWSPGARNQGGGARALLLLLAERFPRRAGPGRLGLGTAGERPRR. Position 122 is a valine amide (Val122).

The protein belongs to the sauvagine/corticotropin-releasing factor/urotensin I family. Interacts with CRHR1 and CRHR2 (via their N-terminal extracellular domain). In terms of tissue distribution, keratinocytes in epidermis and the outer and inner root sheaths of hair follicles, epithelium of sebaceous and sweat glands, erector pili muscle, cutaneous blood vessel walls, cutaneous nerves and dermal mononuclear cells. Detected in plasma cells in the lamia propria in colon mucosa (at protein level). Expressed in pituitary and adrenal glands. Detected in plasma cells in the lamia propria in colon mucosa.

Its subcellular location is the secreted. In terms of biological role, acts in vitro to stimulate the secretion of adrenocorticotropic hormone (ACTH). Binds with high affinity to CRF receptor types 1, 2-alpha, and 2-beta. Plays a role in the establishment of normal hearing thresholds. Reduces food intake and regulates ghrelin levels in gastric body and plasma. This chain is Urocortin (UCN), found in Homo sapiens (Human).